A 517-amino-acid polypeptide reads, in one-letter code: MANIDDIEKQIENIKINSDDNKNNVSKNKNILLNGVNLKDHEIKDNVKSVDYNNNNNENDTMNEINKHVKNDEYCNKENSNNNNNNNNNNNNNLDTQINETLNLNEKFEKKNEENLCSGCKKVLIKKLSCPICLKNKIFSYFCNQECFKGSWKEHQKIHENMNKENNEKEDHLKTIVKKHLSPENFDPTNRKYWVYDDHLKNFVNFKFTGDVRPWPLSKINHVPSHIERPDYAISSIPESELIYKRKSDIYVNNEEEIQRIREACILGRKTLDYAHTLVSPGVTTDEIDRKVHEFIIKNNAYPSTLNYYKFPKSCCTSVNEIVCHGIPDYRPLKSGDIINIDISVFYKGVHSDLNETYFVGDINDVPKEGKELVETCYFSLMEAIKKCKPGMFYKNIGTLIDAYVSKKNFSVVRSYSGHGVGKLFHSNPTVPHFKKNKAVGIMKPGHVFTIEPMINQGHYSDVLWPDQWTSATSDGKLSAQFEHTLLITNNGVEILTKRTQDSPPLGFDTKDELYYN.

A disordered region spans residues 74 to 94; that stretch reads YCNKENSNNNNNNNNNNNNNL. Over residues 79–94 the composition is skewed to low complexity; it reads NSNNNNNNNNNNNNNL. The C6H2-type zinc finger occupies 114 to 166; it reads ENLCSGCKKVLIKKLSCPICLKNKIFSYFCNQECFKGSWKEHQKIHENMNKEN. 8 residues coordinate Zn(2+): Cys117, Cys120, Cys130, Cys133, Cys143, Cys147, His155, and His159. Residue His325 coordinates a protein. Residues Asp342, Asp353, and His419 each contribute to the Zn(2+) site. His426 is a binding site for a protein. Zn(2+)-binding residues include Glu452 and Glu483.

The protein belongs to the peptidase M24A family. Methionine aminopeptidase type 1 subfamily. In terms of assembly, associates with the 60S ribosomal subunit of the 80S translational complex. Requires Zn(2+) as cofactor. It depends on Co(2+) as a cofactor. Mn(2+) is required as a cofactor. Fe(2+) serves as cofactor.

It localises to the cytoplasm. The catalysed reaction is Release of N-terminal amino acids, preferentially methionine, from peptides and arylamides.. Its activity is regulated as follows. Inhibited by pyrimidine derivative XC11. In terms of biological role, cotranslationally removes the N-terminal methionine from nascent proteins. The N-terminal methionine is often cleaved when the second residue in the primary sequence is small and uncharged (Met-Ala-, Cys, Gly, Pro, Ser, Thr, or Val). May play an important role in parasite growth during the blood asexual stage. The protein is Methionine aminopeptidase 1b of Plasmodium falciparum (isolate 3D7).